Here is a 242-residue protein sequence, read N- to C-terminus: Ribosomal RNA small subunit methyltransferase G (242 aa).

S-adenosyl-L-methionine contacts are provided by residues Gly78, Leu83, 130 to 131, and Arg151; that span reads AE.

The protein belongs to the methyltransferase superfamily. RNA methyltransferase RsmG family.

The protein localises to the cytoplasm. In terms of biological role, specifically methylates the N7 position of guanine in position 518 of 16S rRNA. The sequence is that of Ribosomal RNA small subunit methyltransferase G from Salinispora tropica (strain ATCC BAA-916 / DSM 44818 / JCM 13857 / NBRC 105044 / CNB-440).